Here is a 962-residue protein sequence, read N- to C-terminus: Phenylalanine--tRNA ligase beta subunit (962 aa).

One can recognise a tRNA-binding domain in the interval 85 to 201 (TIRWCKVRVC…AEVFQGDELS (117 aa)). In terms of domain architecture, B5 spans 456–538 (TQQSPILLST…RVIGFNRIPS (83 aa)). Mg(2+) is bound by residues Asp-516, Asp-522, Glu-525, and Glu-526. The segment at 621 to 675 (PDSTHNPDSGSDPIIPTGVTRITEPGSSGVSGPGNVGVKEKCSADTSIEHAPTTR) is insert. The 92-residue stretch at 870 to 961 (PTSPAATQHL…ASSKFGAIMR (92 aa)) folds into the FDX-ACB domain.

Belongs to the phenylalanyl-tRNA synthetase beta subunit family. Type 1 subfamily. As to quaternary structure, tetramer of two alpha and two beta subunits. It depends on Mg(2+) as a cofactor.

The protein resides in the cytoplasm. The catalysed reaction is tRNA(Phe) + L-phenylalanine + ATP = L-phenylalanyl-tRNA(Phe) + AMP + diphosphate + H(+). The protein is Phenylalanine--tRNA ligase beta subunit of Tropheryma whipplei (strain Twist) (Whipple's bacillus).